Consider the following 173-residue polypeptide: Dual-action ribosomal maturation protein DarP (173 aa).

The protein belongs to the DarP family.

It localises to the cytoplasm. Its function is as follows. Member of a network of 50S ribosomal subunit biogenesis factors which assembles along the 30S-50S interface, preventing incorrect 23S rRNA structures from forming. Promotes peptidyl transferase center (PTC) maturation. The protein is Dual-action ribosomal maturation protein DarP of Pseudomonas entomophila (strain L48).